The following is a 176-amino-acid chain: ATP-dependent protease subunit HslV (176 aa).

Threonine 2 is a catalytic residue. 3 residues coordinate Na(+): glycine 157, cysteine 160, and threonine 163.

It belongs to the peptidase T1B family. HslV subfamily. As to quaternary structure, a double ring-shaped homohexamer of HslV is capped on each side by a ring-shaped HslU homohexamer. The assembly of the HslU/HslV complex is dependent on binding of ATP.

The protein resides in the cytoplasm. The catalysed reaction is ATP-dependent cleavage of peptide bonds with broad specificity.. With respect to regulation, allosterically activated by HslU binding. Protease subunit of a proteasome-like degradation complex believed to be a general protein degrading machinery. The protein is ATP-dependent protease subunit HslV of Pseudomonas entomophila (strain L48).